We begin with the raw amino-acid sequence, 101 residues long: Protein snet-1 (101 aa).

The first 20 residues, 1–20, serve as a signal peptide directing secretion; sequence MARFTPLLMILLALVPLYYS.

In terms of processing, may be degraded by the nep-2 peptidase. As to expression, expressed in coelomocytes, the ASK sensory neurons and interneurons AIB, AIM and PVQ.

It localises to the secreted. Its subcellular location is the perikaryon. Its function is as follows. Negatively regulates chemotaxis and olfactory plasticity which is the change from positive chemotaxis to dispersal after prolonged exposure to an odorant. May be down-regulated in response to pheromone exposure, resulting in promotion of olfactory plasticity. The sequence is that of Protein snet-1 from Caenorhabditis elegans.